We begin with the raw amino-acid sequence, 215 residues long: UPF0488 protein C8orf33 homolog (215 aa).

Disordered stretches follow at residues 1-72 (MLED…DEQL), 87-111 (LRTQ…RSSK), and 158-199 (CKPV…DTKP). Basic residues predominate over residues 29 to 39 (AKKHKKKKKKK). The span at 40–63 (AGEGKDDQQRETKTTEGETAKQET) shows a compositional bias: basic and acidic residues. 2 stretches are compositionally biased toward basic and acidic residues: residues 167-178 (ERNTQPKNKTDG) and 188-199 (TNEHTKTEDTKP).

The protein belongs to the UPF0488 family.

In Danio rerio (Zebrafish), this protein is UPF0488 protein C8orf33 homolog.